The primary structure comprises 350 residues: 2,5-dihydroxypyridine 5,6-dioxygenase (350 aa).

Residues His-265, His-318, and Asp-320 each coordinate Fe cation.

Fe(2+) is required as a cofactor.

The catalysed reaction is 2,5-dihydroxypyridine + O2 = N-formylmaleamate + H(+). It functions in the pathway cofactor degradation; nicotinate degradation. Catalyzes the dioxygenolytic ring cleavage of 2,5-dihydroxypyridine between carbons 5 and 6 generating N-formylmaleamate in the aerobic nicotinate degradation pathway. This is 2,5-dihydroxypyridine 5,6-dioxygenase (nicX) from Pseudomonas putida (strain ATCC 47054 / DSM 6125 / CFBP 8728 / NCIMB 11950 / KT2440).